The chain runs to 209 residues: Ribosomal RNA large subunit methyltransferase E (209 aa).

Residues Gly63, Trp65, Asp83, Asp99, and Asp124 each contribute to the S-adenosyl-L-methionine site. The Proton acceptor role is filled by Lys164.

Belongs to the class I-like SAM-binding methyltransferase superfamily. RNA methyltransferase RlmE family.

It is found in the cytoplasm. It catalyses the reaction uridine(2552) in 23S rRNA + S-adenosyl-L-methionine = 2'-O-methyluridine(2552) in 23S rRNA + S-adenosyl-L-homocysteine + H(+). Functionally, specifically methylates the uridine in position 2552 of 23S rRNA at the 2'-O position of the ribose in the fully assembled 50S ribosomal subunit. The sequence is that of Ribosomal RNA large subunit methyltransferase E from Aeromonas salmonicida (strain A449).